The sequence spans 497 residues: Glycerol kinase (497 aa).

Thr13 contacts ADP. Positions 13, 14, and 15 each coordinate ATP. Residue Thr13 coordinates sn-glycerol 3-phosphate. Arg17 lines the ADP pocket. Arg83, Glu84, and Tyr135 together coordinate sn-glycerol 3-phosphate. 3 residues coordinate glycerol: Arg83, Glu84, and Tyr135. Phosphohistidine; by HPr is present on His231. Asp245 provides a ligand contact to sn-glycerol 3-phosphate. Glycerol-binding residues include Asp245 and Gln246. ADP-binding residues include Thr267 and Gly310. Thr267, Gly310, Gln314, and Gly411 together coordinate ATP. Residues Gly411 and Asn415 each coordinate ADP.

It belongs to the FGGY kinase family. In terms of assembly, homotetramer and homodimer (in equilibrium). In terms of processing, the phosphoenolpyruvate-dependent sugar phosphotransferase system (PTS), including enzyme I, and histidine-containing protein (HPr) are required for the phosphorylation, which leads to the activation of the enzyme.

The enzyme catalyses glycerol + ATP = sn-glycerol 3-phosphate + ADP + H(+). It functions in the pathway polyol metabolism; glycerol degradation via glycerol kinase pathway; sn-glycerol 3-phosphate from glycerol: step 1/1. Activated by phosphorylation and inhibited by fructose 1,6-bisphosphate (FBP). In terms of biological role, key enzyme in the regulation of glycerol uptake and metabolism. Catalyzes the phosphorylation of glycerol to yield sn-glycerol 3-phosphate. In Listeria monocytogenes serovar 1/2a (strain ATCC BAA-679 / EGD-e), this protein is Glycerol kinase.